Consider the following 506-residue polypeptide: Probable E3 ubiquitin-protein ligase ARI14 (506 aa).

The interval 79-308 (PDSSSEISLE…VDSGFCIKTE (230 aa)) is TRIAD supradomain. An RING-type 1 zinc finger spans residues 83–140 (SEISLETDVYEFDGDNDLISMPFCSHKFDSKYWREYLEKNFYYVEKIQTTISCPDQDC). Zn(2+)-binding residues include cysteine 106, histidine 108, cysteine 135, cysteine 140, cysteine 180, cysteine 185, cysteine 207, cysteine 209, cysteine 214, cysteine 217, histidine 222, cysteine 227, cysteine 258, cysteine 261, cysteine 277, cysteine 279, cysteine 284, cysteine 287, histidine 294, and cysteine 304. The IBR-type zinc finger occupies 158–227 (EMYERYIWRS…RLESHRPVSC (70 aa)). The RING-type 2; atypical zinc-finger motif lies at 258-287 (CPHCLCSLESDTKMPQFLTCVCRLRFCSRC). The segment at 462–492 (GTGPFWYCDRCTYANTWEDNECEMCYDDSAS) adopts a RanBP2-type zinc-finger fold.

The protein belongs to the RBR family. Ariadne subfamily. The cofactor is Zn(2+). Mostly expressed in closed flowers and, to a lower extent, in pollen.

It catalyses the reaction [E2 ubiquitin-conjugating enzyme]-S-ubiquitinyl-L-cysteine + [acceptor protein]-L-lysine = [E2 ubiquitin-conjugating enzyme]-L-cysteine + [acceptor protein]-N(6)-ubiquitinyl-L-lysine.. Its pathway is protein modification; protein ubiquitination. Functionally, might act as an E3 ubiquitin-protein ligase, or as part of E3 complex, which accepts ubiquitin from specific E2 ubiquitin-conjugating enzymes and then transfers it to substrates. Negatively regulates male gametophyte formation and double fertilization. The protein is Probable E3 ubiquitin-protein ligase ARI14 of Arabidopsis thaliana (Mouse-ear cress).